The following is a 461-amino-acid chain: Ribosomal protein uS12 methylthiotransferase RimO (461 aa).

In terms of domain architecture, MTTase N-terminal spans 13-128 (PKVGFVSLGC…VMQHVHMHLP (116 aa)). Residues cysteine 22, cysteine 58, cysteine 87, cysteine 159, cysteine 163, and cysteine 166 each contribute to the [4Fe-4S] cluster site. A Radical SAM core domain is found at 145–390 (LTPRHYAYLK…MEVAEEVSAK (246 aa)). Residues 393–461 (AKKVGKTLKV…ADGHDLWGEV (69 aa)) enclose the TRAM domain.

The protein belongs to the methylthiotransferase family. RimO subfamily. Requires [4Fe-4S] cluster as cofactor.

Its subcellular location is the cytoplasm. It catalyses the reaction L-aspartate(89)-[ribosomal protein uS12]-hydrogen + (sulfur carrier)-SH + AH2 + 2 S-adenosyl-L-methionine = 3-methylsulfanyl-L-aspartate(89)-[ribosomal protein uS12]-hydrogen + (sulfur carrier)-H + 5'-deoxyadenosine + L-methionine + A + S-adenosyl-L-homocysteine + 2 H(+). Functionally, catalyzes the methylthiolation of an aspartic acid residue of ribosomal protein uS12. This is Ribosomal protein uS12 methylthiotransferase RimO from Paraburkholderia xenovorans (strain LB400).